A 492-amino-acid chain; its full sequence is MSAKSIREYDGKAVLAYWLNRSPSISKEEYKTVSATPAVQLAQIQFPLPTLVIPAESTTYREVVEDVFAKVEQEHPWVKETKLVAKPDQLIKRRGKSGLLKLNATWDEAKEWIRERAGKNQKVQHAVGYLTTFLVEPFVPHPPNTEYYININSVREGDWILFCNEGGVDVGDVDAKARKLLVPVRLSEFPSRATIASTLLSDIPVEQHESLVDFIIRLYSVYVDCQFTYLEINPLVVIPTAKGADVFYLDLAAKLDQTAEFECGAKWAVARAPESLGIKTSGEESGAINADHGPPMVFPAPFGRELSKEEAYVQGLDAKTGASLKLTILNAEGRVWNLVAGGGASVVYADAVAVNGAADELANYGEYSGAPTDGQTYEYAKTVLDLMTRGEPRADGKVLFIGGGIANFTSPAVTFRAIARALGDYKDKLHAHKVSIWVRRAGPNYQEGLRVIREAGKKFDLPLKVYGPECHISGIVPMGLGKAPVEAEWQMA.

Residue S24 is modified to Phosphoserine.

It in the N-terminal section; belongs to the succinate/malate CoA ligase beta subunit family. The protein in the C-terminal section; belongs to the succinate/malate CoA ligase alpha subunit family. In terms of assembly, composed of two subunits.

It localises to the cytoplasm. The protein localises to the nucleus. It carries out the reaction oxaloacetate + acetyl-CoA + ADP + phosphate = citrate + ATP + CoA. ATP citrate-lyase is the primary enzyme responsible for the synthesis of cytosolic acetyl-CoA. Has a central role in de novo lipid synthesis. The polypeptide is Probable ATP-citrate synthase subunit 2 (Schizosaccharomyces pombe (strain 972 / ATCC 24843) (Fission yeast)).